Here is a 159-residue protein sequence, read N- to C-terminus: CASP-like protein 1C1 (159 aa).

Residues 1 to 6 (MAKIKR) are Cytoplasmic-facing. Residues 7–27 (IITTLVRLLVLGAALSATIVM) traverse the membrane as a helical segment. The Extracellular portion of the chain corresponds to 28–50 (VTSHDSAEVLNLSFDAKYTNARA). An N-linked (GlcNAc...) asparagine glycan is attached at N38. The chain crosses the membrane as a helical span at residues 51–73 (FVYFAITNAIASGYSFIALFLSF). Over 74–86 (STPLWHLVFLLDV) the chain is Cytoplasmic. Residues 87–107 (FMTLLLTSSISVALAIADVGK) form a helical membrane-spanning segment. Residues 108–130 (KGNSHAGWLPVCGQVPEFCDHVT) are Extracellular-facing. Residues 131 to 151 (GALIAGFSAAVLYLVLLLFSI) traverse the membrane as a helical segment. Residues 152 to 159 (HAVLNPKP) lie on the Cytoplasmic side of the membrane.

This sequence belongs to the Casparian strip membrane proteins (CASP) family. In terms of assembly, homodimer and heterodimers.

It localises to the cell membrane. This is CASP-like protein 1C1 from Vitis vinifera (Grape).